Reading from the N-terminus, the 191-residue chain is UPF0149 protein plu3602 (191 aa).

The protein belongs to the UPF0149 family.

This chain is UPF0149 protein plu3602, found in Photorhabdus laumondii subsp. laumondii (strain DSM 15139 / CIP 105565 / TT01) (Photorhabdus luminescens subsp. laumondii).